Reading from the N-terminus, the 116-residue chain is Bacterial microcompartment shell protein CutR (116 aa).

The BMC circularly permuted domain occupies 10 to 108 (RIIQESVPGK…LEYFKNSLGF (99 aa)).

The protein belongs to the EutS/PduU family. In terms of assembly, has been crystallized in 5 structures (all are mutated, 3 have an N-terminal His-tag), most are homohexameric with a central pore. In two the homohexamer lies flat with a beta-barrel on the flat face created by the protruding N termini of the six chains. In 2 others the hexamer is not flat but has a six-fold screw axis; the screw pitch is 33.8 or 41.9 Angstroms depending on the structure. Interacts with the BMC major shell protein.

Its subcellular location is the bacterial microcompartment. It functions in the pathway amine and polyamine metabolism; choline degradation. A minor shell protein of the choline degradation-specific bacterial microcompartment (BMC). Proteins such as this one with circularly permuted BMC domains may play a key role in conferring heterogeneity and flexibility in this BMC. The chain is Bacterial microcompartment shell protein CutR from Streptococcus intermedius (strain ATCC 27335 / DSM 20573 / CCUG 32759 / CIP 103248 / JCM 12996 / LMG 17840 / NCTC 11324 / SK54 / 1877).